We begin with the raw amino-acid sequence, 77 residues long: Acyl carrier protein (77 aa).

The Carrier domain occupies Ala-2–Thr-77. Position 37 is an O-(pantetheine 4'-phosphoryl)serine (Ser-37).

Belongs to the acyl carrier protein (ACP) family. 4'-phosphopantetheine is transferred from CoA to a specific serine of apo-ACP by AcpS. This modification is essential for activity because fatty acids are bound in thioester linkage to the sulfhydryl of the prosthetic group.

Its subcellular location is the cytoplasm. It functions in the pathway lipid metabolism; fatty acid biosynthesis. Its function is as follows. Carrier of the growing fatty acid chain in fatty acid biosynthesis. The sequence is that of Acyl carrier protein from Geobacter sp. (strain M21).